Reading from the N-terminus, the 564-residue chain is Arginine--tRNA ligase (564 aa).

Residues 122–132 (PNIAKPFSIGH) carry the 'HIGH' region motif.

This sequence belongs to the class-I aminoacyl-tRNA synthetase family. As to quaternary structure, monomer.

The protein resides in the cytoplasm. It carries out the reaction tRNA(Arg) + L-arginine + ATP = L-arginyl-tRNA(Arg) + AMP + diphosphate. The polypeptide is Arginine--tRNA ligase (Lactococcus lactis subsp. cremoris (strain MG1363)).